A 110-amino-acid polypeptide reads, in one-letter code: Prothymosin alpha (110 aa).

The residue at position 1 (methionine 1) is an N-acetylmethionine. The tract at residues 1-110 (MSDAAVDTSS…TKKQKTDEDD (110 aa)) is disordered. N-acetylserine; in Prothymosin alpha, N-terminally processed is present on serine 2. At serine 2 the chain carries Phosphoserine. Threonine 8 carries the phosphothreonine modification. Serine 9 and serine 10 each carry phosphoserine. Threonine 13 and threonine 14 each carry phosphothreonine. Positions 13–31 (TTKDLKEKKEVVEEAENGR) are enriched in basic and acidic residues. N6-acetyllysine; alternate is present on lysine 15. N6-succinyllysine; alternate is present on lysine 15. A compositionally biased stretch (acidic residues) spans 42–83 (ENGEQEADNEVDEEEEEGGEEEEEEEEGDGEEEDGDEDEEAE). Residues 100-110 (DTKKQKTDEDD) are compositionally biased toward basic and acidic residues. The residue at position 101 (threonine 101) is a Phosphothreonine. Lysine 102 bears the N6-acetyllysine; alternate mark. Lysine 102 is covalently cross-linked (Glycyl lysine isopeptide (Lys-Gly) (interchain with G-Cter in SUMO2); alternate). Threonine 106 carries the phosphothreonine modification.

Belongs to the pro/parathymosin family. As to quaternary structure, interacts with NUPR1; regulates apoptotic process. Covalently linked to a small RNA of about 20 nucleotides.

It is found in the nucleus. In terms of biological role, prothymosin alpha may mediate immune function by conferring resistance to certain opportunistic infections. In Pongo abelii (Sumatran orangutan), this protein is Prothymosin alpha (PTMA).